The primary structure comprises 201 residues: ATP-dependent Clp protease proteolytic subunit (201 aa).

The active-site Nucleophile is serine 98. Residue histidine 123 is part of the active site.

Belongs to the peptidase S14 family. As to quaternary structure, fourteen ClpP subunits assemble into 2 heptameric rings which stack back to back to give a disk-like structure with a central cavity, resembling the structure of eukaryotic proteasomes.

Its subcellular location is the cytoplasm. The enzyme catalyses Hydrolysis of proteins to small peptides in the presence of ATP and magnesium. alpha-casein is the usual test substrate. In the absence of ATP, only oligopeptides shorter than five residues are hydrolyzed (such as succinyl-Leu-Tyr-|-NHMec, and Leu-Tyr-Leu-|-Tyr-Trp, in which cleavage of the -Tyr-|-Leu- and -Tyr-|-Trp bonds also occurs).. Its function is as follows. Cleaves peptides in various proteins in a process that requires ATP hydrolysis. Has a chymotrypsin-like activity. Plays a major role in the degradation of misfolded proteins. This chain is ATP-dependent Clp protease proteolytic subunit, found in Rickettsia typhi (strain ATCC VR-144 / Wilmington).